Consider the following 322-residue polypeptide: Elongation factor Ts, mitochondrial (322 aa).

Belongs to the EF-Ts family.

It is found in the mitochondrion. Associates with the EF-Tu.GDP complex and induces the exchange of GDP to GTP. It remains bound to the aminoacyl-tRNA.EF-Tu.GTP complex up to the GTP hydrolysis stage on the ribosome. This is Elongation factor Ts, mitochondrial from Chlamydomonas reinhardtii (Chlamydomonas smithii).